The primary structure comprises 508 residues: Hydroxymethylglutaryl-CoA synthase, mitochondrial (508 aa).

The N-terminal 37 residues, 1–37, are a transit peptide targeting the mitochondrion; it reads MQRLLAPARRVLQVKRVMQESSLSPAHLLPAAQQRFS. Lysine 52 bears the N6-succinyllysine mark. Residues glutamate 80 and alanine 81 each contribute to the (3S)-3-hydroxy-3-methylglutaryl-CoA site. An N6-acetyllysine; alternate mark is found at lysine 83 and lysine 118. Lysine 83 and lysine 118 each carry N6-succinyllysine; alternate. The Proton donor/acceptor role is filled by glutamate 132. (3S)-3-hydroxy-3-methylglutaryl-CoA-binding residues include cysteine 166, asparagine 204, and threonine 208. Catalysis depends on cysteine 166, which acts as the Acyl-thioester intermediate. Lysine 221 is modified (N6-succinyllysine). Lysine 243 is subject to N6-acetyllysine. Lysine 256 carries the N6-acetyllysine; alternate modification. N6-succinyllysine; alternate is present on lysine 256. (3S)-3-hydroxy-3-methylglutaryl-CoA-binding residues include serine 258 and histidine 301. Histidine 301 (proton donor/acceptor) is an active-site residue. Lysine 306 carries the post-translational modification N6-acetyllysine. Residue lysine 310 participates in (3S)-3-hydroxy-3-methylglutaryl-CoA binding. An N6-acetyllysine; alternate mark is found at lysine 310 and lysine 327. 2 positions are modified to N6-succinyllysine; alternate: lysine 310 and lysine 327. At lysine 333 the chain carries N6-succinyllysine. N6-acetyllysine; alternate is present on residues lysine 342, lysine 350, lysine 354, and lysine 358. Residues lysine 342, lysine 350, lysine 354, and lysine 358 each carry the N6-succinyllysine; alternate modification. Positions 380 and 414 each coordinate (3S)-3-hydroxy-3-methylglutaryl-CoA. Residue lysine 427 is modified to N6-acetyllysine. Residue serine 433 is modified to Phosphoserine. Lysine 437 bears the N6-acetyllysine mark. Serine 440 carries the post-translational modification Phosphoserine. Lysine 447 carries the post-translational modification N6-acetyllysine; alternate. Lysine 447 carries the N6-succinyllysine; alternate modification. Serine 456 carries the phosphoserine modification. Lysine 473 bears the N6-acetyllysine; alternate mark. An N6-succinyllysine; alternate modification is found at lysine 473. Serine 477 carries the phosphoserine modification.

Belongs to the thiolase-like superfamily. HMG-CoA synthase family. Homodimer. In terms of processing, succinylated. Desuccinylated by SIRT5. Succinylation, at least at Lys-83 and Lys-310, inhibits the enzymatic activity. In terms of tissue distribution, liver and kidney.

It localises to the mitochondrion. It catalyses the reaction acetoacetyl-CoA + acetyl-CoA + H2O = (3S)-3-hydroxy-3-methylglutaryl-CoA + CoA + H(+). It participates in metabolic intermediate biosynthesis; (R)-mevalonate biosynthesis; (R)-mevalonate from acetyl-CoA: step 2/3. Catalyzes the first irreversible step in ketogenesis, condensing acetyl-CoA to acetoacetyl-CoA to form HMG-CoA, which is converted by HMG-CoA reductase (HMGCR) into mevalonate. The sequence is that of Hydroxymethylglutaryl-CoA synthase, mitochondrial (Hmgcs2) from Rattus norvegicus (Rat).